The following is a 448-amino-acid chain: Gamma conglutin 2 (448 aa).

The first 33 residues, 1–33, serve as a signal peptide directing secretion; sequence MAKNMAQIFPFIAVFLSCSFIFVLSSSQNSQSL. In terms of domain architecture, Peptidase A1 spans 63-428; the sequence is HWANIHKRTP…DLERSRVEFN (366 aa). 5 cysteine pairs are disulfide-bonded: Cys91–Cys181, Cys105–Cys118, Cys110–Cys136, Cys121–Cys131, and Cys349–Cys390. Residue Asn133 is glycosylated (N-linked (GlcNAc...) asparagine).

This sequence belongs to the peptidase A1 family. Two-subunit monomeric unit made of alpha and beta subunits coupled by disulfide bonds (at pH 4.5 and under non-reducing conditions). Can also form oligomers including dimer, tetramer and cyclic hexamer (trimer of dimers) (at pH &gt; 5.5). Component of globulins complexes which accumulate in seeds. Interacts with flavonoids (e.g. apigenin glucosides) present in globulins complexes. Glycosylated on alpha chain. As to expression, expressed in developing seeds and in the young roots and cotyledons of germinating seeds and young seedlings.

The protein localises to the secreted. The protein resides in the extracellular space. In terms of biological role, sulfur-rich seed storage protein that remains undegraded at germination. In Lupinus albus (White lupine), this protein is Gamma conglutin 2.